A 317-amino-acid polypeptide reads, in one-letter code: tRNA-dihydrouridine(16) synthase (317 aa).

FMN-binding positions include 7 to 9 (PME) and Q68. The Proton donor role is filled by C98. FMN-binding positions include K139, 199–201 (NGE), and 223–224 (GR).

This sequence belongs to the Dus family. DusC subfamily. The cofactor is FMN.

It carries out the reaction 5,6-dihydrouridine(16) in tRNA + NADP(+) = uridine(16) in tRNA + NADPH + H(+). The enzyme catalyses 5,6-dihydrouridine(16) in tRNA + NAD(+) = uridine(16) in tRNA + NADH + H(+). Its function is as follows. Catalyzes the synthesis of 5,6-dihydrouridine (D), a modified base found in the D-loop of most tRNAs, via the reduction of the C5-C6 double bond in target uridines. Specifically modifies U16 in tRNAs. The polypeptide is tRNA-dihydrouridine(16) synthase (Pseudomonas syringae pv. tomato (strain ATCC BAA-871 / DC3000)).